A 901-amino-acid polypeptide reads, in one-letter code: Protein translocase subunit SecA (901 aa).

ATP contacts are provided by residues glutamine 87, 105-109 (GEGKT), and aspartate 512. Residues cysteine 885, cysteine 887, cysteine 896, and histidine 897 each contribute to the Zn(2+) site.

The protein belongs to the SecA family. In terms of assembly, monomer and homodimer. Part of the essential Sec protein translocation apparatus which comprises SecA, SecYEG and auxiliary proteins SecDF-YajC and YidC. It depends on Zn(2+) as a cofactor.

It is found in the cell inner membrane. The protein localises to the cytoplasm. It catalyses the reaction ATP + H2O + cellular proteinSide 1 = ADP + phosphate + cellular proteinSide 2.. Its function is as follows. Part of the Sec protein translocase complex. Interacts with the SecYEG preprotein conducting channel. Has a central role in coupling the hydrolysis of ATP to the transfer of proteins into and across the cell membrane, serving both as a receptor for the preprotein-SecB complex and as an ATP-driven molecular motor driving the stepwise translocation of polypeptide chains across the membrane. In Salmonella typhi, this protein is Protein translocase subunit SecA.